The following is a 100-amino-acid chain: Enhancer of yellow 2 transcription factor (100 aa).

Belongs to the ENY2 family. In terms of assembly, component of the nuclear pore complex (NPC)-associated AMEX complex (anchoring and mRNA export complex), composed of at least e(y)2 and xmas-2. Component of the SAGA transcription coactivator-HAT complexes, at least composed of Ada2b, e(y)2, Pcaf/Gcn5, Taf10 and Nipped-A/Trrap. Within the SAGA complex, e(y)2, Sgf11, and not/nonstop form an additional subcomplex of SAGA called the DUB module (deubiquitination module). Component of the THO complex, composed of at least e(y)2, HPR1, THO2, THOC5, THOC6 and THOC7. Interacts with e(y)1. Interacts with su(Hw) (via zinc fingers). Interacts with xmas-2; required for localization to the nuclear periphery. Interacts with the nuclear pore complex (NPC).

Its subcellular location is the nucleus. It is found in the nucleoplasm. It localises to the cytoplasm. Its function is as follows. Involved in mRNA export coupled transcription activation by association with both the AMEX and the SAGA complexes. The SAGA complex is a multiprotein complex that activates transcription by remodeling chromatin and mediating histone acetylation and deubiquitination. Within the SAGA complex, participates in a subcomplex that specifically deubiquitinates histone H2B. The SAGA complex is recruited to specific gene promoters by activators, where it is required for transcription. Required for nuclear receptor-mediated transactivation. Involved in transcription elongation by recruiting the THO complex onto nascent mRNA. The AMEX complex functions in docking export-competent ribonucleoprotein particles (mRNPs) to the nuclear entrance of the nuclear pore complex (nuclear basket). AMEX participates in mRNA export and accurate chromatin positioning in the nucleus by tethering genes to the nuclear periphery. The chain is Enhancer of yellow 2 transcription factor from Drosophila pseudoobscura pseudoobscura (Fruit fly).